A 248-amino-acid polypeptide reads, in one-letter code: tRNA (guanine-N(1)-)-methyltransferase (248 aa).

S-adenosyl-L-methionine-binding positions include Gly113 and 133 to 138 (IGDFVL).

The protein belongs to the RNA methyltransferase TrmD family. Homodimer.

Its subcellular location is the cytoplasm. It catalyses the reaction guanosine(37) in tRNA + S-adenosyl-L-methionine = N(1)-methylguanosine(37) in tRNA + S-adenosyl-L-homocysteine + H(+). In terms of biological role, specifically methylates guanosine-37 in various tRNAs. In Dehalococcoides mccartyi (strain ATCC BAA-2100 / JCM 16839 / KCTC 5957 / BAV1), this protein is tRNA (guanine-N(1)-)-methyltransferase.